Here is a 774-residue protein sequence, read N- to C-terminus: Cleavage and polyadenylation specificity factor subunit 3 (774 aa).

Residues 1 to 26 (MHHNNHHHGHHGRYQHHHNQHLKRPL) show a composition bias toward basic residues. The interval 1–30 (MHHNNHHHGHHGRYQHHHNQHLKRPLKGGT) is disordered. The Zn(2+) site is built by histidine 97, histidine 99, aspartate 101, histidine 102, histidine 185, and aspartate 206. Histidine 423 serves as the catalytic Proton donor. Residue histidine 445 coordinates Zn(2+). The disordered stretch occupies residues 636–665 (KEEITKDDIEKEKEKEKEQQDGDDDDDDEI). Basic and acidic residues predominate over residues 638–655 (EITKDDIEKEKEKEKEQQ).

It belongs to the metallo-beta-lactamase superfamily. RNA-metabolizing metallo-beta-lactamase-like family. CPSF3 subfamily. In terms of assembly, component of the cleavage and polyadenylation specificity factor (CPSF) complex. Requires Zn(2+) as cofactor.

It is found in the nucleus. Functionally, component of the cleavage and polyadenylation specificity factor (CPSF) complex that play a key role in pre-mRNA 3'-end formation, recognizing the AAUAAA signal sequence and interacting with poly(A) polymerase and other factors to bring about cleavage and poly(A) addition. Has endonuclease activity, and functions as an mRNA 3'-end-processing endonuclease. This Dictyostelium discoideum (Social amoeba) protein is Cleavage and polyadenylation specificity factor subunit 3 (cpsf3).